Here is a 638-residue protein sequence, read N- to C-terminus: Methylmalonyl-CoA mutase small subunit (638 aa).

Over residues 1–11 the composition is skewed to polar residues; sequence MSSTDQGTNPA. The tract at residues 1-34 is disordered; it reads MSSTDQGTNPADTDDLTPTTLSLAGDFPKATEEQ.

It belongs to the methylmalonyl-CoA mutase family. In terms of assembly, heterodimer of an alpha and a beta chain. It depends on adenosylcob(III)alamin as a cofactor.

The catalysed reaction is (R)-methylmalonyl-CoA = succinyl-CoA. Its pathway is metabolic intermediate metabolism; propanoyl-CoA degradation; succinyl-CoA from propanoyl-CoA: step 3/3. Functionally, catalyzes the isomerization of succinyl-CoA to methylmalonyl-CoA during synthesis of propionate from tricarboxylic acid-cycle intermediates. The polypeptide is Methylmalonyl-CoA mutase small subunit (mutA) (Propionibacterium freudenreichii subsp. shermanii).